Here is a 606-residue protein sequence, read N- to C-terminus: Polypeptide N-acetylgalactosaminyltransferase 9 (606 aa).

Topologically, residues 1 to 6 (MAVARK) are cytoplasmic. The chain crosses the membrane as a helical; Signal-anchor for type II membrane protein span at residues 7–29 (IRTLLTVNILVFVGIVLFSVYCR). The Lumenal segment spans residues 30–606 (LQGRSQELVR…IRNWIKHARH (577 aa)). Residues 43-62 (GGCRPRPATPAPGSPLRSGG) form a disordered region. Cystine bridges form between Cys-144–Cys-375 and Cys-366–Cys-445. The interval 153–264 (LPQVSVVFIF…TGWAEPALSR (112 aa)) is catalytic subdomain A. Substrate-binding residues include Asp-194 and Arg-225. The Mn(2+) site is built by Asp-248, His-250, and His-380. The segment at 321–383 (PIRTPAMIGC…PCSRVAHIER (63 aa)) is catalytic subdomain B. Substrate is bound by residues Arg-383 and Tyr-388. N-linked (GlcNAc...) asparagine glycosylation is present at Asn-463. The Ricin B-type lectin domain occupies 467–603 (TYGEVRNSKA…KWMIRNWIKH (137 aa)). 3 disulfides stabilise this stretch: Cys-480–Cys-496, Cys-528–Cys-543, and Cys-570–Cys-590.

This sequence belongs to the glycosyltransferase 2 family. GalNAc-T subfamily. Mn(2+) serves as cofactor.

It localises to the golgi apparatus membrane. The enzyme catalyses L-seryl-[protein] + UDP-N-acetyl-alpha-D-galactosamine = a 3-O-[N-acetyl-alpha-D-galactosaminyl]-L-seryl-[protein] + UDP + H(+). The catalysed reaction is L-threonyl-[protein] + UDP-N-acetyl-alpha-D-galactosamine = a 3-O-[N-acetyl-alpha-D-galactosaminyl]-L-threonyl-[protein] + UDP + H(+). The protein operates within protein modification; protein glycosylation. In terms of biological role, catalyzes the initial reaction in O-linked oligosaccharide biosynthesis, the transfer of an N-acetyl-D-galactosamine residue to a serine or threonine residue on the protein receptor. Does not glycosylate apomucin or SDC3. This is Polypeptide N-acetylgalactosaminyltransferase 9 (GALNT9) from Macaca fascicularis (Crab-eating macaque).